Here is a 1029-residue protein sequence, read N- to C-terminus: Carbamoyl phosphate synthase large chain (1029 aa).

The segment at 1–402 is carboxyphosphate synthetic domain; sequence MPKRTDLQTI…SLQKALRSTE (402 aa). Positions 129, 169, 175, 176, 208, 210, 215, 241, 242, 243, 285, and 299 each coordinate ATP. Residues 133 to 328 enclose the ATP-grasp 1 domain; it reads QAAMKKIGVE…IAKIAALLAV (196 aa). The Mg(2+) site is built by glutamine 285, glutamate 299, and asparagine 301. 3 residues coordinate Mn(2+): glutamine 285, glutamate 299, and asparagine 301. The interval 403 to 546 is oligomerization domain; that stretch reads SDVRGAFAEM…YSTYEWEDEV (144 aa). Residues 547-929 form a carbamoyl phosphate synthetic domain region; the sequence is TPTDKPKVVI…AYYRAELGAK (383 aa). The ATP-grasp 2 domain occupies 671 to 863; sequence NALCERLGLP…LAKYAARIAV (193 aa). Positions 707, 747, 749, 754, 779, 780, 781, 782, 822, and 834 each coordinate ATP. Mg(2+) is bound by residues glutamine 822, glutamate 834, and asparagine 836. Residues glutamine 822, glutamate 834, and asparagine 836 each coordinate Mn(2+). One can recognise an MGS-like domain in the interval 930–1028; the sequence is SNLPLSGTAL…QAWQQREAAA (99 aa). The tract at residues 930–1029 is allosteric domain; that stretch reads SNLPLSGTAL…AWQQREAAAS (100 aa).

It belongs to the CarB family. As to quaternary structure, composed of two chains; the small (or glutamine) chain promotes the hydrolysis of glutamine to ammonia, which is used by the large (or ammonia) chain to synthesize carbamoyl phosphate. Tetramer of heterodimers (alpha,beta)4. Requires Mg(2+) as cofactor. The cofactor is Mn(2+).

It carries out the reaction hydrogencarbonate + L-glutamine + 2 ATP + H2O = carbamoyl phosphate + L-glutamate + 2 ADP + phosphate + 2 H(+). It catalyses the reaction hydrogencarbonate + NH4(+) + 2 ATP = carbamoyl phosphate + 2 ADP + phosphate + 2 H(+). It participates in amino-acid biosynthesis; L-arginine biosynthesis; carbamoyl phosphate from bicarbonate: step 1/1. It functions in the pathway pyrimidine metabolism; UMP biosynthesis via de novo pathway; (S)-dihydroorotate from bicarbonate: step 1/3. In terms of biological role, large subunit of the glutamine-dependent carbamoyl phosphate synthetase (CPSase). CPSase catalyzes the formation of carbamoyl phosphate from the ammonia moiety of glutamine, carbonate, and phosphate donated by ATP, constituting the first step of 2 biosynthetic pathways, one leading to arginine and/or urea and the other to pyrimidine nucleotides. The large subunit (synthetase) binds the substrates ammonia (free or transferred from glutamine from the small subunit), hydrogencarbonate and ATP and carries out an ATP-coupled ligase reaction, activating hydrogencarbonate by forming carboxy phosphate which reacts with ammonia to form carbamoyl phosphate. This is Carbamoyl phosphate synthase large chain from Deinococcus geothermalis (strain DSM 11300 / CIP 105573 / AG-3a).